We begin with the raw amino-acid sequence, 843 residues long: Protein translocase subunit SecA 1 (843 aa).

ATP-binding positions include Q91, 109-113 (GEGKT), and D498. Positions 799-813 (EAKHVSAEDGKEKVK) are enriched in basic and acidic residues. The segment at 799 to 826 (EAKHVSAEDGKEKVKPKPIVKGDQVGRN) is disordered. Zn(2+) contacts are provided by C829, C831, C840, and H841.

Belongs to the SecA family. Monomer and homodimer. Part of the essential Sec protein translocation apparatus which comprises SecA, SecYEG and auxiliary proteins SecDF. Other proteins may also be involved. The cofactor is Zn(2+).

It localises to the cell membrane. The protein resides in the cytoplasm. The catalysed reaction is ATP + H2O + cellular proteinSide 1 = ADP + phosphate + cellular proteinSide 2.. In terms of biological role, part of the Sec protein translocase complex. Interacts with the SecYEG preprotein conducting channel. Has a central role in coupling the hydrolysis of ATP to the transfer of proteins into and across the cell membrane, serving as an ATP-driven molecular motor driving the stepwise translocation of polypeptide chains across the membrane. This Staphylococcus aureus (strain MRSA252) protein is Protein translocase subunit SecA 1.